Reading from the N-terminus, the 338-residue chain is Glutamyl-tRNA reductase (338 aa).

Substrate-binding positions include 50–53 (TCHR), S102, 107–109 (ETE), and Q113. The active-site Nucleophile is C51. 181–186 (GYSEIN) lines the NADP(+) pocket.

Belongs to the glutamyl-tRNA reductase family. In terms of assembly, homodimer.

The catalysed reaction is (S)-4-amino-5-oxopentanoate + tRNA(Glu) + NADP(+) = L-glutamyl-tRNA(Glu) + NADPH + H(+). It participates in porphyrin-containing compound metabolism; protoporphyrin-IX biosynthesis; 5-aminolevulinate from L-glutamyl-tRNA(Glu): step 1/2. Catalyzes the NADPH-dependent reduction of glutamyl-tRNA(Glu) to glutamate 1-semialdehyde (GSA). This chain is Glutamyl-tRNA reductase, found in Chlamydia abortus (strain DSM 27085 / S26/3) (Chlamydophila abortus).